Reading from the N-terminus, the 225-residue chain is Insulin-induced gene 2 protein (225 aa).

At 1–28 (MAEGETESPGPKKCGPYISSVTSQSVNL) the chain is on the cytoplasmic side. The chain crosses the membrane as a helical span at residues 29-51 (MIRGVVLFFIGVFLALVLNLLQI). Topologically, residues 52 to 70 (QRNVTLFPPDVIASIFSSA) are lumenal. Residues 71 to 88 (WWVPPCCGTASAVIGLLY) traverse the membrane as a helical segment. Topologically, residues 89-103 (PCIDRHLGEPHKFKR) are cytoplasmic. Residues 104–126 (EWSSVMRCVAVFVGINHASAKVD) traverse the membrane as a helical segment. Over 127-129 (FDN) the chain is Lumenal. A helical membrane pass occupies residues 130 to 148 (NIQLSLTLAALSIGLWWTF). At 149–153 (DRSRS) the chain is on the cytoplasmic side. Position 151 is a phosphoserine (Ser151). Residues 154 to 175 (GFGLGVGIAFLATLVTQLLVYN) form a helical membrane-spanning segment. At 176-189 (GVYQYTSPDFLYVR) the chain is on the lumenal side. Residues 190 to 207 (SWLPCIFFAGGITMGNIG) traverse the membrane as a helical segment. The Cytoplasmic segment spans residues 208–225 (RQLAMYECKVIAEKSHQE). The residue at position 215 (Cys215) is a Cysteine sulfenic acid (-SOH); alternate. Residue Cys215 forms a Glycyl cysteine thioester (Cys-Gly) (interchain with G-Cter in ubiquitin); alternate linkage. The KxHxx signature appears at 219 to 225 (AEKSHQE).

Belongs to the INSIG family. As to quaternary structure, interacts with SCAP; interaction is direct and only takes place in the presence of sterols; it prevents interaction between SCAP and the coat protein complex II (COPII). Associates with the SCAP-SREBP complex (composed of SCAP and SREBF1/SREBP1 or SREBF2/SREBP2); association is mediated via its interaction with SCAP and only takes place in the presence of sterols. Interacts with RNF139. Interacts with RNF145. Post-translationally, phosphorylation at Ser-151 by PCK1 reduces binding to oxysterol, disrupting the interaction between INSIG2 and SCAP, thereby promoting nuclear translocation of SREBP proteins (SREBF1/SREBP1 or SREBF2/SREBP2) and subsequent transcription of downstream lipogenesis-related genes. Polyubiquitinated by AMFR/gp78 at Cys-215 in some tissues such as adipose tissues, undifferentiated myoblasts and liver, leading to its degradation. In differentiated myotubes, Cys-215 oxidation prevents ubiquitination at the same site, resulting in protein stabilization. In terms of processing, oxidized at Cys-215 in differentiated myotubes, preventing ubiquitination at the same site, and resulting in protein stabilization.

It localises to the endoplasmic reticulum membrane. Its function is as follows. Oxysterol-binding protein that mediates feedback control of cholesterol synthesis by controlling both endoplasmic reticulum to Golgi transport of SCAP and degradation of HMGCR. Acts as a negative regulator of cholesterol biosynthesis by mediating the retention of the SCAP-SREBP complex in the endoplasmic reticulum, thereby blocking the processing of sterol regulatory element-binding proteins (SREBPs) SREBF1/SREBP1 and SREBF2/SREBP2. Binds oxysterol, including 22-hydroxycholesterol, 24-hydroxycholesterol, 25-hydroxycholesterol and 27-hydroxycholesterol, regulating interaction with SCAP and retention of the SCAP-SREBP complex in the endoplasmic reticulum. In presence of oxysterol, interacts with SCAP, retaining the SCAP-SREBP complex in the endoplasmic reticulum, thereby preventing SCAP from escorting SREBF1/SREBP1 and SREBF2/SREBP2 to the Golgi. Sterol deprivation or phosphorylation by PCK1 reduce oxysterol-binding, disrupting the interaction between INSIG2 and SCAP, thereby promoting Golgi transport of the SCAP-SREBP complex, followed by processing and nuclear translocation of SREBF1/SREBP1 and SREBF2/SREBP2. Also regulates cholesterol synthesis by regulating degradation of HMGCR: initiates the sterol-mediated ubiquitin-mediated endoplasmic reticulum-associated degradation (ERAD) of HMGCR via recruitment of the reductase to the ubiquitin ligase RNF139. The sequence is that of Insulin-induced gene 2 protein from Papio anubis (Olive baboon).